A 537-amino-acid chain; its full sequence is Trypsin-resistant surface T6 protein (537 aa).

A signal peptide spans 1 to 22; sequence MLACLAILAVVGLGMTRVSALS. Residues 310 to 330 are hydrophilic; that stretch reads GNTYDNLDKKPDKGNGITSKE. The LPXTG sorting signal signature appears at 504–508; it reads LPSTG. T507 is subject to Pentaglycyl murein peptidoglycan amidated threonine. Positions 508 to 537 are cleaved as a propeptide — removed by sortase; the sequence is GSIGTYLFKAIGSAAMIGAIGIYIVKRRKA.

The protein localises to the secreted. The protein resides in the cell wall. In Streptococcus pyogenes serotype M6 (strain ATCC BAA-946 / MGAS10394), this protein is Trypsin-resistant surface T6 protein (tee6).